The following is a 520-amino-acid chain: Transactivator/viroplasmin protein (520 aa).

Residues 487 to 520 (KDASADSGPKDGPPPTRSIVEKEDVPTTSSKQVD) are disordered.

The protein belongs to the caulimoviridae viroplasmin family.

It localises to the host cytoplasm. Its function is as follows. Enhances the ribosomal termination-reinitiation event leading to the translation of major open reading frames on the polycistronic viral RNAs. This is Transactivator/viroplasmin protein from Arabidopsis thaliana (Mouse-ear cress).